Here is a 450-residue protein sequence, read N- to C-terminus: Ribosomal protein uS12 methylthiotransferase RimO (450 aa).

In terms of domain architecture, MTTase N-terminal spans 9–124 (NRINVVTLGC…LLSALEADYK (116 aa)). Positions 18, 53, 87, 148, 152, and 155 each coordinate [4Fe-4S] cluster. In terms of domain architecture, Radical SAM core spans 134-365 (TTPKNYAYLK…EIQSQISWEL (232 aa)). One can recognise a TRAM domain in the interval 367–434 (QQKIGEVFNV…DFDLYGEPLN (68 aa)).

This sequence belongs to the methylthiotransferase family. RimO subfamily. It depends on [4Fe-4S] cluster as a cofactor.

The protein localises to the cytoplasm. It carries out the reaction L-aspartate(89)-[ribosomal protein uS12]-hydrogen + (sulfur carrier)-SH + AH2 + 2 S-adenosyl-L-methionine = 3-methylsulfanyl-L-aspartate(89)-[ribosomal protein uS12]-hydrogen + (sulfur carrier)-H + 5'-deoxyadenosine + L-methionine + A + S-adenosyl-L-homocysteine + 2 H(+). Functionally, catalyzes the methylthiolation of an aspartic acid residue of ribosomal protein uS12. The chain is Ribosomal protein uS12 methylthiotransferase RimO from Christiangramia forsetii (strain DSM 17595 / CGMCC 1.15422 / KT0803) (Gramella forsetii).